Consider the following 171-residue polypeptide: Protein-export protein SecB (171 aa).

It belongs to the SecB family. In terms of assembly, homotetramer, a dimer of dimers. One homotetramer interacts with 1 SecA dimer.

Its subcellular location is the cytoplasm. In terms of biological role, one of the proteins required for the normal export of preproteins out of the cell cytoplasm. It is a molecular chaperone that binds to a subset of precursor proteins, maintaining them in a translocation-competent state. It also specifically binds to its receptor SecA. The protein is Protein-export protein SecB of Granulibacter bethesdensis (strain ATCC BAA-1260 / CGDNIH1).